Consider the following 407-residue polypeptide: Protein trichome birefringence-like 12 (407 aa).

The helical; Signal-anchor for type II membrane protein transmembrane segment at 21-41 threads the bilayer; the sequence is SLLPRILLLSLLLLLFYSLIL. Positions 130-132 match the GDS motif motif; the sequence is GDS. The DCXHWCLPGXXDXWN motif motif lies at 379–393; that stretch reads DCMHWCLPGVPDTWV.

This sequence belongs to the PC-esterase family. TBL subfamily.

Its subcellular location is the membrane. May act as a bridging protein that binds pectin and other cell wall polysaccharides. Probably involved in maintaining esterification of pectins. May be involved in the specific O-acetylation of cell wall polymers. This chain is Protein trichome birefringence-like 12 (TBL12), found in Arabidopsis thaliana (Mouse-ear cress).